A 589-amino-acid polypeptide reads, in one-letter code: Aspartate--tRNA ligase (589 aa).

Residue Glu-176 participates in L-aspartate binding. Positions 200 to 203 (QLFK) are aspartate. Arg-222 is an L-aspartate binding site. ATP is bound by residues 222 to 224 (RDE) and Gln-231. His-449 is an L-aspartate binding site. An ATP-binding site is contributed by Glu-483. Arg-490 serves as a coordination point for L-aspartate. An ATP-binding site is contributed by 535 to 538 (GLDR).

Belongs to the class-II aminoacyl-tRNA synthetase family. Type 1 subfamily. As to quaternary structure, homodimer.

The protein localises to the cytoplasm. It carries out the reaction tRNA(Asp) + L-aspartate + ATP = L-aspartyl-tRNA(Asp) + AMP + diphosphate. Functionally, catalyzes the attachment of L-aspartate to tRNA(Asp) in a two-step reaction: L-aspartate is first activated by ATP to form Asp-AMP and then transferred to the acceptor end of tRNA(Asp). This Enterococcus faecalis (strain ATCC 700802 / V583) protein is Aspartate--tRNA ligase.